The chain runs to 438 residues: Enolase (438 aa).

Substrate-binding residues include His-159 and Glu-168. Glu-211 serves as the catalytic Proton donor. 3 residues coordinate Mg(2+): Asp-246, Glu-297, and Asp-322. Glu-297 and Asp-322 together coordinate substrate. Lys-347 (proton acceptor) is an active-site residue. Residues 374–377 and Lys-398 each bind substrate; that span reads SHRS.

It belongs to the enolase family. As to quaternary structure, homodimer. The cofactor is Mg(2+).

Its subcellular location is the cytoplasm. The catalysed reaction is (2R)-2-phosphoglycerate = phosphoenolpyruvate + H2O. Its pathway is carbohydrate degradation; glycolysis; pyruvate from D-glyceraldehyde 3-phosphate: step 4/5. This Aspergillus fumigatus (strain ATCC MYA-4609 / CBS 101355 / FGSC A1100 / Af293) (Neosartorya fumigata) protein is Enolase (enoA).